The sequence spans 266 residues: Trypsin Blo t 3 (266 aa).

The first 15 residues, 1 to 15 (MKVLVLFCLVSLAAA), serve as a signal peptide directing secretion. The propeptide occupies 16-35 (GPLKDALNKAQVDAFYAEGY). The region spanning 36–260 (IVDGSNAADG…RVGNYISWIK (225 aa)) is the Peptidase S1 domain. Cys60 and Cys76 are oxidised to a cystine. Catalysis depends on charge relay system residues His75 and Asp120. Cystine bridges form between Cys187/Cys204 and Cys216/Cys240. The Charge relay system role is filled by Ser220.

It belongs to the peptidase S1 family.

Its subcellular location is the secreted. It catalyses the reaction Preferential cleavage: Arg-|-Xaa, Lys-|-Xaa.. The polypeptide is Trypsin Blo t 3 (Blomia tropicalis (Mite)).